A 729-amino-acid polypeptide reads, in one-letter code: Fatty acid oxidation complex subunit alpha (729 aa).

An enoyl-CoA hydratase/isomerase region spans residues 1-189 (MLYKGDTLYL…KIGLVDGVVK (189 aa)). Substrate is bound at residue D296. The segment at 311–729 (ETPKQAAVLG…ARLVGDLKTA (419 aa)) is 3-hydroxyacyl-CoA dehydrogenase. Residues M324, D343, 400–402 (VVE), K407, and S429 contribute to the NAD(+) site. Catalysis depends on H450, which acts as the For 3-hydroxyacyl-CoA dehydrogenase activity. N453 is an NAD(+) binding site. The substrate site is built by N500 and Y660.

It in the N-terminal section; belongs to the enoyl-CoA hydratase/isomerase family. In the C-terminal section; belongs to the 3-hydroxyacyl-CoA dehydrogenase family. Heterotetramer of two alpha chains (FadB) and two beta chains (FadA).

The catalysed reaction is a (3S)-3-hydroxyacyl-CoA + NAD(+) = a 3-oxoacyl-CoA + NADH + H(+). It carries out the reaction a (3S)-3-hydroxyacyl-CoA = a (2E)-enoyl-CoA + H2O. The enzyme catalyses a 4-saturated-(3S)-3-hydroxyacyl-CoA = a (3E)-enoyl-CoA + H2O. It catalyses the reaction (3S)-3-hydroxybutanoyl-CoA = (3R)-3-hydroxybutanoyl-CoA. The catalysed reaction is a (3Z)-enoyl-CoA = a 4-saturated (2E)-enoyl-CoA. It carries out the reaction a (3E)-enoyl-CoA = a 4-saturated (2E)-enoyl-CoA. It functions in the pathway lipid metabolism; fatty acid beta-oxidation. Its function is as follows. Involved in the aerobic and anaerobic degradation of long-chain fatty acids via beta-oxidation cycle. Catalyzes the formation of 3-oxoacyl-CoA from enoyl-CoA via L-3-hydroxyacyl-CoA. It can also use D-3-hydroxyacyl-CoA and cis-3-enoyl-CoA as substrate. This Escherichia coli (strain SE11) protein is Fatty acid oxidation complex subunit alpha.